We begin with the raw amino-acid sequence, 1014 residues long: Exportin-T (1014 aa).

Belongs to the exportin family.

It is found in the nucleus. Its subcellular location is the cytoplasm. In terms of biological role, tRNA nucleus export receptor which facilitates tRNA translocation across the nuclear pore complex. Involved in pre-tRNA splicing, probably by affecting the interaction of pre-tRNA with splicing endonuclease. This Podospora anserina (strain S / ATCC MYA-4624 / DSM 980 / FGSC 10383) (Pleurage anserina) protein is Exportin-T (LOS1).